The following is a 529-amino-acid chain: Putative E3 ubiquitin-protein ligase ARI4 (529 aa).

Residues 1–22 (MDDEYMSLEEEEDNCYPSEFDD) are compositionally biased toward acidic residues. Positions 1–23 (MDDEYMSLEEEEDNCYPSEFDDH) are disordered. The interval 115–327 (KTMKCDICME…IAGHSCGRYK (213 aa)) is TRIAD supradomain. C119, C122, C137, H139, C142, C145, C164, C169, C206, C212, C230, C232, C237, C240, H245, C250, C277, and C280 together coordinate Zn(2+). The segment at 119–169 (CDICMEEDLSKYAMTRMECGHRFCNDCWKEHFTVRINEGEGKRIRCMAYKC) adopts an RING-type 1 zinc-finger fold. Residues 186 to 250 (EKFDRFLIES…LSESHSPCSC (65 aa)) form an IBR-type zinc finger. Residues 277–305 (CPKCSKPIQKRDGCNHMTCKCGQHFCWLC) form an RING-type 2; atypical zinc finger. C290 is a catalytic residue. 6 residues coordinate Zn(2+): C295, C297, C302, C305, H313, and C323.

Belongs to the RBR family. Ariadne subfamily. The cofactor is Zn(2+).

It catalyses the reaction [E2 ubiquitin-conjugating enzyme]-S-ubiquitinyl-L-cysteine + [acceptor protein]-L-lysine = [E2 ubiquitin-conjugating enzyme]-L-cysteine + [acceptor protein]-N(6)-ubiquitinyl-L-lysine.. Its pathway is protein modification; protein ubiquitination. Functionally, might act as an E3 ubiquitin-protein ligase, or as part of E3 complex, which accepts ubiquitin from specific E2 ubiquitin-conjugating enzymes and then transfers it to substrates. The sequence is that of Putative E3 ubiquitin-protein ligase ARI4 (ARI4) from Arabidopsis thaliana (Mouse-ear cress).